The primary structure comprises 336 residues: Aspartate--ammonia ligase (336 aa).

This sequence belongs to the class-II aminoacyl-tRNA synthetase family. AsnA subfamily.

The protein localises to the cytoplasm. It carries out the reaction L-aspartate + NH4(+) + ATP = L-asparagine + AMP + diphosphate + H(+). It participates in amino-acid biosynthesis; L-asparagine biosynthesis; L-asparagine from L-aspartate (ammonia route): step 1/1. The polypeptide is Aspartate--ammonia ligase (Lactobacillus acidophilus (strain ATCC 700396 / NCK56 / N2 / NCFM)).